We begin with the raw amino-acid sequence, 316 residues long: Transaldolase A (316 aa).

Lys131 acts as the Schiff-base intermediate with substrate in catalysis.

It belongs to the transaldolase family. Type 1 subfamily. Homodimer.

It is found in the cytoplasm. It catalyses the reaction D-sedoheptulose 7-phosphate + D-glyceraldehyde 3-phosphate = D-erythrose 4-phosphate + beta-D-fructose 6-phosphate. The protein operates within carbohydrate degradation; pentose phosphate pathway; D-glyceraldehyde 3-phosphate and beta-D-fructose 6-phosphate from D-ribose 5-phosphate and D-xylulose 5-phosphate (non-oxidative stage): step 2/3. Transaldolase is important for the balance of metabolites in the pentose-phosphate pathway. The protein is Transaldolase A of Salmonella typhimurium (strain LT2 / SGSC1412 / ATCC 700720).